Here is a 379-residue protein sequence, read N- to C-terminus: Carbamoyl phosphate synthase small chain (379 aa).

The interval 1-184 (MVSLYLENGL…LDYKPFDEKN (184 aa)) is CPSase. L-glutamine contacts are provided by Ser44, Gly240, and Gly242. In terms of domain architecture, Glutamine amidotransferase type-1 spans 188–378 (TIAVLDFGAK…VKLLENFPTR (191 aa)). Cys268 serves as the catalytic Nucleophile. The L-glutamine site is built by Leu269, Gln272, Asn310, and Tyr313. Catalysis depends on residues His351 and Glu353.

This sequence belongs to the CarA family. As to quaternary structure, composed of two chains; the small (or glutamine) chain promotes the hydrolysis of glutamine to ammonia, which is used by the large (or ammonia) chain to synthesize carbamoyl phosphate. Tetramer of heterodimers (alpha,beta)4.

The catalysed reaction is hydrogencarbonate + L-glutamine + 2 ATP + H2O = carbamoyl phosphate + L-glutamate + 2 ADP + phosphate + 2 H(+). It carries out the reaction L-glutamine + H2O = L-glutamate + NH4(+). It participates in amino-acid biosynthesis; L-arginine biosynthesis; carbamoyl phosphate from bicarbonate: step 1/1. The protein operates within pyrimidine metabolism; UMP biosynthesis via de novo pathway; (S)-dihydroorotate from bicarbonate: step 1/3. Small subunit of the glutamine-dependent carbamoyl phosphate synthetase (CPSase). CPSase catalyzes the formation of carbamoyl phosphate from the ammonia moiety of glutamine, carbonate, and phosphate donated by ATP, constituting the first step of 2 biosynthetic pathways, one leading to arginine and/or urea and the other to pyrimidine nucleotides. The small subunit (glutamine amidotransferase) binds and cleaves glutamine to supply the large subunit with the substrate ammonia. The protein is Carbamoyl phosphate synthase small chain of Helicobacter acinonychis (strain Sheeba).